The sequence spans 237 residues: Ribonuclease PH (237 aa).

Phosphate-binding positions include Arg86 and Gly124–Arg126.

The protein belongs to the RNase PH family. As to quaternary structure, homohexameric ring arranged as a trimer of dimers.

The catalysed reaction is tRNA(n+1) + phosphate = tRNA(n) + a ribonucleoside 5'-diphosphate. Functionally, phosphorolytic 3'-5' exoribonuclease that plays an important role in tRNA 3'-end maturation. Removes nucleotide residues following the 3'-CCA terminus of tRNAs; can also add nucleotides to the ends of RNA molecules by using nucleoside diphosphates as substrates, but this may not be physiologically important. Probably plays a role in initiation of 16S rRNA degradation (leading to ribosome degradation) during starvation. In Methylocella silvestris (strain DSM 15510 / CIP 108128 / LMG 27833 / NCIMB 13906 / BL2), this protein is Ribonuclease PH.